The primary structure comprises 1096 residues: cAMP/cGMP-dependent 3',5'-cAMP/cGMP phosphodiesterase B (1096 aa).

The segment at 216 to 248 (SSSKMIINDSPRTQQRNGTTEQQKKQQQQQYLQ) is disordered. Polar residues predominate over residues 225–236 (SPRTQQRNGTTE). Residues His-573, His-575, and Asp-577 each contribute to the a divalent metal cation site. A nucleoside 3',5'-cyclic phosphate is bound by residues 783-930 (VFSK…DLSH) and 946-1070 (ITQH…EDNI).

The protein belongs to the metallo-beta-lactamase superfamily. cNMP phosphodiesterase family. Mn(2+) serves as cofactor. Mg(2+) is required as a cofactor. The cofactor is Zn(2+).

The protein localises to the cytoplasm. Its subcellular location is the cytosol. The catalysed reaction is 3',5'-cyclic AMP + H2O = AMP + H(+). It carries out the reaction 3',5'-cyclic GMP + H2O = GMP + H(+). Functionally, dual specificity cAMP and cGMP phosphodiesterase with marked preference for cyclic AMP, which is activated by cAMP and cGMP. Likely functions as a cAMP-stimulated cAMP-phosphodiesterase which may play a role in regulating the cAMP relay response. The sequence is that of cAMP/cGMP-dependent 3',5'-cAMP/cGMP phosphodiesterase B (pdeE) from Dictyostelium discoideum (Social amoeba).